The chain runs to 543 residues: Aluminum-activated malate transporter 14 (543 aa).

The next 6 helical transmembrane spans lie at 56 to 76 (VGVSLTLVSLLYLMEPLFKGI), 80 to 100 (AIWAVMTVVVVLEFSAGATLC), 106 to 126 (GLGTLIAGSLAFFIEFVANDS), 129 to 149 (IFRAIFIGAAVFIIGALITYL), 164 to 184 (LIFLLTFNLITVSSYRVDTVI), and 191 to 211 (FYTIAMGVGICLLMSLLVFPI). A disordered region spans residues 416–438 (DTNEAASYQNTGTPRGERMSRFG). A compositionally biased stretch (polar residues) spans 419–428 (EAASYQNTGT). Residues 445 to 472 (RLRADTLERRSAAATNERKILRQQLSRI) adopt a coiled-coil conformation.

This sequence belongs to the aromatic acid exporter (TC 2.A.85) family.

The protein localises to the membrane. Malate transporter. In Arabidopsis thaliana (Mouse-ear cress), this protein is Aluminum-activated malate transporter 14 (ALMT14).